The following is a 312-amino-acid chain: MSIPRELSVASGSKSISPKPSVYDYITLLKPRVMLLVVFTALVGLIVSPVSINPLYGFLAILCIAVGGGGAGALNMWYDADIDAVMERTKSRPIPAGKISSRKAFIFGMVLSILSVLIMGSFVNWFAALFLAFTIFFYIVVYTIWLKRRTPQNIVIGGAAGAFPPMIGWAAATGTVNIESFLLFLIIFMWTPPHFWSLSLFSSLDYDAAGIPMMPNVRGEHSTKKQILFYTILMAICAAGPFIIGFAGVFYGIFSTVLSIIFIHFAYRLWKSNTYDATILMAKKTFFFSLFYLAAIFGILLIEFFVWCFIIL.

8 helical membrane passes run 33-53 (VMLL…VSIN), 54-74 (PLYG…AGAL), 105-125 (FIFG…FVNW), 126-146 (FAAL…TIWL), 154-174 (IVIG…AATG), 181-201 (FLLF…LSLF), 243-263 (IIGF…IIFI), and 291-311 (FYLA…CFII).

It belongs to the UbiA prenyltransferase family. Protoheme IX farnesyltransferase subfamily.

It is found in the cell inner membrane. The catalysed reaction is heme b + (2E,6E)-farnesyl diphosphate + H2O = Fe(II)-heme o + diphosphate. It functions in the pathway porphyrin-containing compound metabolism; heme O biosynthesis; heme O from protoheme: step 1/1. Functionally, converts heme B (protoheme IX) to heme O by substitution of the vinyl group on carbon 2 of heme B porphyrin ring with a hydroxyethyl farnesyl side group. In Bartonella henselae (strain ATCC 49882 / DSM 28221 / CCUG 30454 / Houston 1) (Rochalimaea henselae), this protein is Protoheme IX farnesyltransferase.